A 340-amino-acid polypeptide reads, in one-letter code: Phenylalanine--tRNA ligase alpha subunit (340 aa).

E255 is a binding site for Mg(2+).

Belongs to the class-II aminoacyl-tRNA synthetase family. Phe-tRNA synthetase alpha subunit type 1 subfamily. As to quaternary structure, tetramer of two alpha and two beta subunits. Requires Mg(2+) as cofactor.

It localises to the cytoplasm. It catalyses the reaction tRNA(Phe) + L-phenylalanine + ATP = L-phenylalanyl-tRNA(Phe) + AMP + diphosphate + H(+). This Exiguobacterium sp. (strain ATCC BAA-1283 / AT1b) protein is Phenylalanine--tRNA ligase alpha subunit.